Reading from the N-terminus, the 453-residue chain is Insulinoma-associated protein 1b (453 aa).

An SNAG domain region spans residues Met1 to Ile20. The interval Asn140–Pro179 is disordered. Basic and acidic residues predominate over residues Pro162–Val171. The segment at Tyr252–His274 adopts a C2H2-type 1 zinc-finger fold. The disordered stretch occupies residues Ala298–Asp318. 3 C2H2-type zinc fingers span residues Tyr321–His343, Leu383–His406, and Phe412–His435.

Belongs to the INSM1 family.

It is found in the nucleus. Its function is as follows. May act as a transcriptional regulator. May play a role in neurogenesis and neuroendocrine cell differentiation during embryonic development. This Danio rerio (Zebrafish) protein is Insulinoma-associated protein 1b (insm1b).